Here is an 82-residue protein sequence, read N- to C-terminus: Conotoxin Tx6.6 (82 aa).

An N-terminal signal peptide occupies residues 1–19; the sequence is MKLTCVMIVAVLFLTAWTL. Residues 20-51 constitute a propeptide that is removed on maturation; the sequence is VMADDSNNGLANLFSKLRDEMEDPEGSKLEKK. 3 disulfides stabilise this stretch: C53–C71, C60–C76, and C70–C81. The residue at position 82 (A82) is an Alanine amide; partial.

The protein belongs to the O1 superfamily. Expressed by the venom duct.

It localises to the secreted. Functionally, omega-conotoxins act at presynaptic membranes, they bind and block voltage-gated calcium channels (Cav). In Conus textile (Cloth-of-gold cone), this protein is Conotoxin Tx6.6.